The sequence spans 145 residues: Basic phospholipase A2 cPt10 (145 aa).

The first 21 residues, 1-21 (MYPAHLLVLLAVCVSLLGASA), serve as a signal peptide directing secretion. Positions 22–27 (IPPLPL) are excised as a propeptide. Cystine bridges form between Cys-38–Cys-98, Cys-54–Cys-144, Cys-56–Cys-72, Cys-71–Cys-125, Cys-78–Cys-118, Cys-87–Cys-111, and Cys-105–Cys-116. Positions 55, 57, and 59 each coordinate Ca(2+). The active site involves His-75. Ca(2+) is bound at residue Asp-76. The active site involves Asp-119.

The protein belongs to the phospholipase A2 family. Group I subfamily. D49 sub-subfamily. Ca(2+) is required as a cofactor. Expressed by the venom gland.

The protein resides in the secreted. It carries out the reaction a 1,2-diacyl-sn-glycero-3-phosphocholine + H2O = a 1-acyl-sn-glycero-3-phosphocholine + a fatty acid + H(+). Functionally, PLA2 catalyzes the calcium-dependent hydrolysis of the 2-acyl groups in 3-sn-phosphoglycerides. This chain is Basic phospholipase A2 cPt10, found in Laticauda semifasciata (Black-banded sea krait).